The chain runs to 161 residues: MTSIVEALVPGGKANPGPPLGPALGPLGVNIKEVVEKINEKTRDYNGMQVPVKVIVDDKKNVEIEVGTPPTASLIMKELGIQKGSGNAGSEVVGNISISQVAKIARMKKEDVLSYDLKATMKEVMGTCVPMGVTVEGVEARDSQKALDQGKFDDLLAGEEW.

The protein belongs to the universal ribosomal protein uL11 family. As to quaternary structure, part of the ribosomal stalk of the 50S ribosomal subunit. Interacts with L10 and the large rRNA to form the base of the stalk. L10 forms an elongated spine to which L12 dimers bind in a sequential fashion forming a multimeric L10(L12)X complex.

Its function is as follows. Forms part of the ribosomal stalk which helps the ribosome interact with GTP-bound translation factors. The sequence is that of Large ribosomal subunit protein uL11 from Methanosarcina barkeri (strain Fusaro / DSM 804).